We begin with the raw amino-acid sequence, 453 residues long: Kynureninase (453 aa).

Residues Leu114, Thr115, 142–145 (FPSD), Asp232, His235, and Tyr257 contribute to the pyridoxal 5'-phosphate site. Lys258 is modified (N6-(pyridoxal phosphate)lysine). Pyridoxal 5'-phosphate is bound at residue Trp286.

This sequence belongs to the kynureninase family. In terms of assembly, homodimer. It depends on pyridoxal 5'-phosphate as a cofactor.

It is found in the cytoplasm. It carries out the reaction L-kynurenine + H2O = anthranilate + L-alanine + H(+). The catalysed reaction is 3-hydroxy-L-kynurenine + H2O = 3-hydroxyanthranilate + L-alanine + H(+). It functions in the pathway amino-acid degradation; L-kynurenine degradation; L-alanine and anthranilate from L-kynurenine: step 1/1. The protein operates within cofactor biosynthesis; NAD(+) biosynthesis; quinolinate from L-kynurenine: step 2/3. Functionally, catalyzes the cleavage of L-kynurenine (L-Kyn) and L-3-hydroxykynurenine (L-3OHKyn) into anthranilic acid (AA) and 3-hydroxyanthranilic acid (3-OHAA), respectively. In Cryptococcus neoformans var. neoformans serotype D (strain B-3501A) (Filobasidiella neoformans), this protein is Kynureninase.